Here is a 160-residue protein sequence, read N- to C-terminus: Major pollen allergen Car b 1 isoforms 1A and 1B (160 aa).

This sequence belongs to the BetVI family.

This Carpinus betulus (European hornbeam) protein is Major pollen allergen Car b 1 isoforms 1A and 1B.